The chain runs to 141 residues: MNQFEAYSLLFVDSFVSNLIISFQNELIFHSMQMLVGYNRLIMLLVAICSSLSGNTVNYLFGKIVLNIFYASKNEQNILRHKNLTKLYYQYETFIIFLISFPFWGCFVSLFSGFFKTKFLKFLSIGCLAKACYYASKIYIF.

The next 2 helical transmembrane spans lie at 41–61 (LIML…NYLF) and 95–115 (IIFL…SGFF).

It localises to the cell membrane. This is an uncharacterized protein from Rickettsia prowazekii (strain Madrid E).